Here is a 609-residue protein sequence, read N- to C-terminus: Replication protein E1 (609 aa).

A Nuclear localization signal motif is present at residues K81–K83. 2 positions are modified to phosphoserine; by host: S87 and S94. The Nuclear export signal motif lies at L93 to I102. The DNA-binding region stretch occupies residues Q149–A312. An SF3 helicase domain is found at I411 to Q561. G437–S444 serves as a coordination point for ATP. A Glycyl lysine isopeptide (Lys-Gly) (interchain with G-Cter in SUMO) cross-link involves residue K518. Residues D584 to L609 are disordered.

The protein belongs to the papillomaviridae E1 protein family. In terms of assembly, can form hexamers. Interacts with E2 protein; this interaction increases E1 DNA binding specificity. Interacts with host DNA polymerase subunit POLA2. Interacts with host single stranded DNA-binding protein RPA1. Interacts with host TOP1; this interaction stimulates the enzymatic activity of TOP1. Post-translationally, phosphorylated. Sumoylated.

It localises to the host nucleus. The enzyme catalyses Couples ATP hydrolysis with the unwinding of duplex DNA by translocating in the 3'-5' direction.. The catalysed reaction is ATP + H2O = ADP + phosphate + H(+). In terms of biological role, ATP-dependent DNA 3'-5' helicase required for initiation of viral DNA replication. It forms a complex with the viral E2 protein. The E1-E2 complex binds to the replication origin which contains binding sites for both proteins. During the initial step, a dimer of E1 interacts with a dimer of protein E2 leading to a complex that binds the viral origin of replication with high specificity. Then, a second dimer of E1 displaces the E2 dimer in an ATP-dependent manner to form the E1 tetramer. Following this, two E1 monomers are added to each half of the site, which results in the formation of two E1 trimers on the viral ori. Subsequently, two hexamers will be created. The double hexamer acts as a bi-directional helicase machinery and unwinds the viral DNA and then recruits the host DNA polymerase to start replication. This Homo sapiens (Human) protein is Replication protein E1.